The primary structure comprises 574 residues: Proline--tRNA ligase (574 aa).

It belongs to the class-II aminoacyl-tRNA synthetase family. ProS type 1 subfamily. Homodimer.

It is found in the cytoplasm. The catalysed reaction is tRNA(Pro) + L-proline + ATP = L-prolyl-tRNA(Pro) + AMP + diphosphate. Catalyzes the attachment of proline to tRNA(Pro) in a two-step reaction: proline is first activated by ATP to form Pro-AMP and then transferred to the acceptor end of tRNA(Pro). As ProRS can inadvertently accommodate and process non-cognate amino acids such as alanine and cysteine, to avoid such errors it has two additional distinct editing activities against alanine. One activity is designated as 'pretransfer' editing and involves the tRNA(Pro)-independent hydrolysis of activated Ala-AMP. The other activity is designated 'posttransfer' editing and involves deacylation of mischarged Ala-tRNA(Pro). The misacylated Cys-tRNA(Pro) is not edited by ProRS. The protein is Proline--tRNA ligase of Teredinibacter turnerae (strain ATCC 39867 / T7901).